A 167-amino-acid chain; its full sequence is NADH-quinone oxidoreductase subunit B 2 (167 aa).

Residues C38, C39, C103, and C132 each coordinate [4Fe-4S] cluster.

The protein belongs to the complex I 20 kDa subunit family. In terms of assembly, NDH-1 is composed of 14 different subunits. Subunits NuoB, C, D, E, F, and G constitute the peripheral sector of the complex. The cofactor is [4Fe-4S] cluster.

It is found in the cell inner membrane. It catalyses the reaction a quinone + NADH + 5 H(+)(in) = a quinol + NAD(+) + 4 H(+)(out). NDH-1 shuttles electrons from NADH, via FMN and iron-sulfur (Fe-S) centers, to quinones in the respiratory chain. The immediate electron acceptor for the enzyme in this species is believed to be ubiquinone. Couples the redox reaction to proton translocation (for every two electrons transferred, four hydrogen ions are translocated across the cytoplasmic membrane), and thus conserves the redox energy in a proton gradient. The sequence is that of NADH-quinone oxidoreductase subunit B 2 from Rhizobium etli (strain CIAT 652).